A 100-amino-acid polypeptide reads, in one-letter code: ATP-dependent Clp protease adapter protein ClpS (100 aa).

The protein belongs to the ClpS family. Binds to the N-terminal domain of the chaperone ClpA.

Its function is as follows. Involved in the modulation of the specificity of the ClpAP-mediated ATP-dependent protein degradation. The polypeptide is ATP-dependent Clp protease adapter protein ClpS (Nitratidesulfovibrio vulgaris (strain DSM 19637 / Miyazaki F) (Desulfovibrio vulgaris)).